The chain runs to 272 residues: UPF0759 protein YecE (272 aa).

This sequence belongs to the UPF0759 family.

This chain is UPF0759 protein YecE (yecE), found in Escherichia coli (strain K12).